The chain runs to 165 residues: E3 ubiquitin ligase complex SCF subunit sconC (165 aa).

The segment at 106–165 is interaction with the F-box domain of F-box proteins; it reads ILAANYLDIKALLDVGCKTVANMIKGKSPEEIRKTFNIQNDFTPEEEDQIRRENEWAEDR.

It belongs to the SKP1 family. As to quaternary structure, component of the SCF (SKP1-CUL1-F-box protein) E3 ubiquitin ligase complexes.

It participates in protein modification; protein ubiquitination. In terms of biological role, essential component of the SCF (SKP1-CUL1-F-box protein) E3 ubiquitin ligase complexes, which mediate the ubiquitination and subsequent proteasomal degradation of target proteins. Controls sulfur metabolite repression, probably by mediating the inactivation or degradation of the metR transcription factor. The sequence is that of E3 ubiquitin ligase complex SCF subunit sconC (sconC) from Arthroderma otae (Microsporum canis).